A 137-amino-acid polypeptide reads, in one-letter code: Endoribonuclease YbeY (137 aa).

His-103, His-107, and His-113 together coordinate Zn(2+).

The protein belongs to the endoribonuclease YbeY family. Requires Zn(2+) as cofactor.

It localises to the cytoplasm. In terms of biological role, single strand-specific metallo-endoribonuclease involved in late-stage 70S ribosome quality control and in maturation of the 3' terminus of the 16S rRNA. This Acholeplasma laidlawii (strain PG-8A) protein is Endoribonuclease YbeY.